The sequence spans 549 residues: Eukaryotic translation initiation factor 3 subunit D-2 (549 aa).

The tract at residues 107-157 is disordered; the sequence is ARVKGRSGRGPGMLGVAGSMAGGGTTSGSTKYGKGRESRRNQGRRFARNAP. Residues 114–132 show a composition bias toward gly residues; sequence GRGPGMLGVAGSMAGGGTT. Positions 288 to 302 are RNA gate; the sequence is QFDLLTVNETSLEPP. The interval 527-549 is disordered; sequence NSFDSDAEDEENSSEPFANSLDN. The span at 529 to 539 shows a compositional bias: acidic residues; it reads FDSDAEDEENS.

It belongs to the eIF-3 subunit D family. Component of the eukaryotic translation initiation factor 3 (eIF-3) complex. The eIF-3 complex interacts with pix.

It localises to the cytoplasm. Functionally, mRNA cap-binding component of the eukaryotic translation initiation factor 3 (eIF-3) complex, which is involved in protein synthesis of a specialized repertoire of mRNAs and, together with other initiation factors, stimulates binding of mRNA and methionyl-tRNAi to the 40S ribosome. The eIF-3 complex specifically targets and initiates translation of a subset of mRNAs involved in cell proliferation. In the eIF-3 complex, eif3d specifically recognizes and binds the 7-methylguanosine cap of a subset of mRNAs. This chain is Eukaryotic translation initiation factor 3 subunit D-2, found in Drosophila ananassae (Fruit fly).